Here is a 1024-residue protein sequence, read N- to C-terminus: Probable alpha-mannosidase At5g13980 (1024 aa).

The signal sequence occupies residues 1–21 (MDLAKFLCWIVLLLGISLVES). Asn27 is a glycosylation site (N-linked (GlcNAc...) asparagine). Zn(2+) contacts are provided by His46 and Asp48. Asn63 carries N-linked (GlcNAc...) asparagine glycosylation. Asp168 serves as a coordination point for Zn(2+). Asn278 is a glycosylation site (N-linked (GlcNAc...) asparagine). His410 contacts Zn(2+). Cys461 and Cys469 form a disulfide bridge. N-linked (GlcNAc...) asparagine glycans are attached at residues Asn465, Asn475, Asn637, Asn658, Asn733, and Asn823. Cys827 and Cys832 are joined by a disulfide.

It belongs to the glycosyl hydrolase 38 family. In terms of assembly, homodimer. Requires Zn(2+) as cofactor.

It carries out the reaction Hydrolysis of terminal, non-reducing alpha-D-mannose residues in alpha-D-mannosides.. Functionally, liberates mannose from p-nitrophenyl-alpha-D-mannoside in vitro. The polypeptide is Probable alpha-mannosidase At5g13980 (Arabidopsis thaliana (Mouse-ear cress)).